Consider the following 232-residue polypeptide: Aspartate/glutamate leucyltransferase (232 aa).

It belongs to the R-transferase family. Bpt subfamily.

It is found in the cytoplasm. It catalyses the reaction N-terminal L-glutamyl-[protein] + L-leucyl-tRNA(Leu) = N-terminal L-leucyl-L-glutamyl-[protein] + tRNA(Leu) + H(+). The enzyme catalyses N-terminal L-aspartyl-[protein] + L-leucyl-tRNA(Leu) = N-terminal L-leucyl-L-aspartyl-[protein] + tRNA(Leu) + H(+). Functions in the N-end rule pathway of protein degradation where it conjugates Leu from its aminoacyl-tRNA to the N-termini of proteins containing an N-terminal aspartate or glutamate. The chain is Aspartate/glutamate leucyltransferase from Vibrio vulnificus (strain CMCP6).